The chain runs to 582 residues: ATP-dependent lipid A-core flippase (582 aa).

Helical transmembrane passes span 16–36, 63–83, 153–173, 253–273, and 275–295; these read LWPT…ALIL, VLVW…ITSY, IIGL…ILIV, PIIQ…ASFP, and VMDN…IALM. An ABC transmembrane type-1 domain is found at 28-310; sequence IVAGVALILN…LTNVNAQFQR (283 aa). Residues 342–578 enclose the ABC transporter domain; that stretch reads VEFRNVTFTY…RGVYAQLHKM (237 aa). Residue 376–383 coordinates ATP; that stretch reads GRSGSGKS.

This sequence belongs to the ABC transporter superfamily. Lipid exporter (TC 3.A.1.106) family. Homodimer.

The protein localises to the cell inner membrane. The enzyme catalyses ATP + H2O + lipid A-core oligosaccharideSide 1 = ADP + phosphate + lipid A-core oligosaccharideSide 2.. In terms of biological role, involved in lipopolysaccharide (LPS) biosynthesis. Translocates lipid A-core from the inner to the outer leaflet of the inner membrane. Transmembrane domains (TMD) form a pore in the inner membrane and the ATP-binding domain (NBD) is responsible for energy generation. The protein is ATP-dependent lipid A-core flippase of Shigella flexneri.